The sequence spans 430 residues: mRNA cap guanine-N(7) methyltransferase (430 aa).

Residues 1–88 (MALRPEKPVW…YDLEERKKKQ (88 aa)) are disordered. Basic and acidic residues predominate over residues 15–37 (QYDRQYGKLEEPKPPREESKPGD). An mRNA cap 0 methyltransferase domain is found at 136–419 (SPIIKLRNFN…FYTVFAFRKV (284 aa)). 145–146 (NN) provides a ligand contact to mRNA. Lys-149, Gly-167, Asp-189, Asp-218, Gln-244, and Tyr-249 together coordinate S-adenosyl-L-methionine.

The protein belongs to the class I-like SAM-binding methyltransferase superfamily. mRNA cap 0 methyltransferase family.

It localises to the nucleus. The enzyme catalyses a 5'-end (5'-triphosphoguanosine)-ribonucleoside in mRNA + S-adenosyl-L-methionine = a 5'-end (N(7)-methyl 5'-triphosphoguanosine)-ribonucleoside in mRNA + S-adenosyl-L-homocysteine. Responsible for methylating the 5'-cap structure of mRNAs. The sequence is that of mRNA cap guanine-N(7) methyltransferase (ABD1) from Eremothecium gossypii (strain ATCC 10895 / CBS 109.51 / FGSC 9923 / NRRL Y-1056) (Yeast).